We begin with the raw amino-acid sequence, 142 residues long: Large ribosomal subunit protein mL42 (142 aa).

The transit peptide at 1–32 (MAVAAVKWVMSKRTILKHLFPVQNGALYCVCH) directs the protein to the mitochondrion.

It belongs to the mitochondrion-specific ribosomal protein mL42 family. In terms of assembly, component of the mitochondrial large ribosomal subunit (mt-LSU). Mature mammalian 55S mitochondrial ribosomes consist of a small (28S) and a large (39S) subunit. The 28S small subunit contains a 12S ribosomal RNA (12S mt-rRNA) and 30 different proteins. The 39S large subunit contains a 16S rRNA (16S mt-rRNA), a copy of mitochondrial valine transfer RNA (mt-tRNA(Val)), which plays an integral structural role, and 52 different proteins.

It localises to the mitochondrion. The protein is Large ribosomal subunit protein mL42 (MRPL42) of Homo sapiens (Human).